The sequence spans 550 residues: Undecaprenyl phosphate-alpha-4-amino-4-deoxy-L-arabinose arabinosyl transferase 2 (550 aa).

11 consecutive transmembrane segments (helical) span residues 4–24 (LKPGIGLMCIIALYYLLPLSF), 81–101 (FAVHFGSAFSIALTALMVYWL), 110–132 (WLGLTAAAIYSSCLLVYSIGTYA), 176–196 (FMTKGFLALAVPVLSVLPWVI), 204–224 (VFIYGPLALLGAVATSLPWVI), 255–275 (APFWYYLPVLLAGTLPWLGLL), 288–308 (TQSGAFYLLGWVVMPLLFFSL), 313–333 (LPTYILPSFAPLALLMARYAA), 348–368 (LLFGLLCVITVASVLAPWGLA), 381–401 (VLLGVLGFLVWAAVGGLTLRA), and 409–429 (AALCPLGIALLVGQAIPQQVI).

It belongs to the glycosyltransferase 83 family.

The protein resides in the cell inner membrane. It catalyses the reaction 4-amino-4-deoxy-alpha-L-arabinopyranosyl di-trans,octa-cis-undecaprenyl phosphate + lipid IVA = lipid IIA + di-trans,octa-cis-undecaprenyl phosphate.. It participates in lipopolysaccharide metabolism; 4-amino-4-deoxy-beta-L-arabinose-lipid A biosynthesis. Its function is as follows. Catalyzes the transfer of the L-Ara4N moiety of the glycolipid undecaprenyl phosphate-alpha-L-Ara4N to lipid A. The modified arabinose is attached to lipid A and is required for resistance to polymyxin and cationic antimicrobial peptides. This chain is Undecaprenyl phosphate-alpha-4-amino-4-deoxy-L-arabinose arabinosyl transferase 2, found in Sodalis glossinidius (strain morsitans).